The primary structure comprises 365 residues: Geranylgeranyl pyrophosphate synthase (365 aa).

Residues 1 to 11 (MKPLPSTNGKV) show a composition bias toward polar residues. Residues 1-36 (MKPLPSTNGKVNGNGKHHDSSLSSTSSTSSSSSSDT) are disordered. Low complexity predominate over residues 21 to 34 (SLSSTSSTSSSSSS). Isopentenyl diphosphate is bound by residues Lys-78, Arg-81, and His-110. Residues Asp-117 and Asp-121 each coordinate Mg(2+). Position 126 (Arg-126) interacts with dimethylallyl diphosphate. Residue Arg-127 participates in isopentenyl diphosphate binding. Dimethylallyl diphosphate-binding residues include Lys-211, Thr-212, and Gln-247. Mg(2+) is bound at residue Asp-250. Residues Asn-254, Lys-263, and Lys-273 each coordinate dimethylallyl diphosphate.

This sequence belongs to the FPP/GGPP synthase family. Mg(2+) is required as a cofactor.

The enzyme catalyses isopentenyl diphosphate + dimethylallyl diphosphate = (2E)-geranyl diphosphate + diphosphate. It carries out the reaction isopentenyl diphosphate + (2E)-geranyl diphosphate = (2E,6E)-farnesyl diphosphate + diphosphate. The catalysed reaction is isopentenyl diphosphate + (2E,6E)-farnesyl diphosphate = (2E,6E,10E)-geranylgeranyl diphosphate + diphosphate. Geranylgeranyl pyrophosphate synthase that catalyzes the trans-addition of the three molecules of IPP onto DMAPP to form geranylgeranyl pyrophosphate. Does not show any monoterpene nor sesquiterpene synthase activity. This chain is Geranylgeranyl pyrophosphate synthase, found in Melampsora lini (Rust fungus).